The primary structure comprises 392 residues: tRNA(Met) cytidine acetate ligase (392 aa).

Residues 7 to 20, G101, N162, and 187 to 188 contribute to the ATP site; these read VVEY…HQLH and RI.

The protein belongs to the TmcAL family.

It is found in the cytoplasm. It carries out the reaction cytidine(34) in elongator tRNA(Met) + acetate + ATP = N(4)-acetylcytidine(34) in elongator tRNA(Met) + AMP + diphosphate. Its function is as follows. Catalyzes the formation of N(4)-acetylcytidine (ac(4)C) at the wobble position of elongator tRNA(Met), using acetate and ATP as substrates. First activates an acetate ion to form acetyladenylate (Ac-AMP) and then transfers the acetyl group to tRNA to form ac(4)C34. The protein is tRNA(Met) cytidine acetate ligase of Listeria welshimeri serovar 6b (strain ATCC 35897 / DSM 20650 / CCUG 15529 / CIP 8149 / NCTC 11857 / SLCC 5334 / V8).